A 489-amino-acid chain; its full sequence is Glutamate--tRNA ligase (489 aa).

The 'HIGH' region signature appears at 11–21 (PSPTGHLHIGN). The 'KMSKS' region motif lies at 252–256 (KLSKR). K255 lines the ATP pocket.

Belongs to the class-I aminoacyl-tRNA synthetase family. Glutamate--tRNA ligase type 1 subfamily. In terms of assembly, monomer.

It is found in the cytoplasm. It catalyses the reaction tRNA(Glu) + L-glutamate + ATP = L-glutamyl-tRNA(Glu) + AMP + diphosphate. Its function is as follows. Catalyzes the attachment of glutamate to tRNA(Glu) in a two-step reaction: glutamate is first activated by ATP to form Glu-AMP and then transferred to the acceptor end of tRNA(Glu). This Oceanobacillus iheyensis (strain DSM 14371 / CIP 107618 / JCM 11309 / KCTC 3954 / HTE831) protein is Glutamate--tRNA ligase.